The primary structure comprises 67 residues: DNA-directed RNA polymerase subunit omega (67 aa).

The protein belongs to the RNA polymerase subunit omega family. In terms of assembly, the RNAP catalytic core consists of 2 alpha, 1 beta, 1 beta' and 1 omega subunit. When a sigma factor is associated with the core the holoenzyme is formed, which can initiate transcription.

It carries out the reaction RNA(n) + a ribonucleoside 5'-triphosphate = RNA(n+1) + diphosphate. In terms of biological role, promotes RNA polymerase assembly. Latches the N- and C-terminal regions of the beta' subunit thereby facilitating its interaction with the beta and alpha subunits. The sequence is that of DNA-directed RNA polymerase subunit omega from Paraburkholderia phymatum (strain DSM 17167 / CIP 108236 / LMG 21445 / STM815) (Burkholderia phymatum).